The sequence spans 166 residues: Kelch repeat protein B10 (166 aa).

2 Kelch repeats span residues 25–76 and 77–129; these read TIFV…STFG and MLYF…KLNN.

It belongs to the poxviruses Kelch family.

The sequence is that of Kelch repeat protein B10 from Oryctolagus cuniculus (Rabbit).